Consider the following 1027-residue polypeptide: D-2-hydroxyglutarate dehydrogenase (1027 aa).

The FAD-binding PCMH-type domain occupies 48-284; that stretch reads YQQLPQAILF…CEAKLNLLLI (237 aa). Positions 405 and 503 each coordinate (R)-2-hydroxyglutarate. Positions 665–696 constitute a 4Fe-4S ferredoxin-type domain; sequence HEVKAAMDTCLACKACASQCPIKIDVPSFRAK. [4Fe-4S] cluster is bound by residues C674, C677, C680, and C684.

The protein in the N-terminal section; belongs to the FAD-binding oxidoreductase/transferase type 4 family. Homotetramer. The cofactor is [4Fe-4S] cluster. FAD serves as cofactor.

The enzyme catalyses (R)-2-hydroxyglutarate + A = 2-oxoglutarate + AH2. Catalyzes the oxidation of D-2-hydroxyglutarate (D-2-HGA) to 2-oxoglutarate. Provides the way to recycle D-2-HGA produced during L-serine synthesis by SerA, by converting it back to 2-oxoglutarate. The physiological molecule that functions as the primary electron acceptor during D-2-HGA oxidation is unknown. In Haemophilus influenzae (strain ATCC 51907 / DSM 11121 / KW20 / Rd), this protein is D-2-hydroxyglutarate dehydrogenase.